Reading from the N-terminus, the 732-residue chain is Elongation factor 2 (732 aa).

The region spanning 19 to 260 (ERIRNIGIAA…MVVKHLPNPI (242 aa)) is the tr-type G domain. Residues 28-35 (AHIDHGKT), 94-98 (DTPGH), and 148-151 (NKVD) each bind GTP. Histidine 597 bears the Diphthamide mark.

This sequence belongs to the TRAFAC class translation factor GTPase superfamily. Classic translation factor GTPase family. EF-G/EF-2 subfamily.

Its subcellular location is the cytoplasm. Its function is as follows. Catalyzes the GTP-dependent ribosomal translocation step during translation elongation. During this step, the ribosome changes from the pre-translocational (PRE) to the post-translocational (POST) state as the newly formed A-site-bound peptidyl-tRNA and P-site-bound deacylated tRNA move to the P and E sites, respectively. Catalyzes the coordinated movement of the two tRNA molecules, the mRNA and conformational changes in the ribosome. The chain is Elongation factor 2 (fusA) from Pyrococcus abyssi (strain GE5 / Orsay).